The chain runs to 108 residues: Tubulin-specific chaperone A (108 aa).

Ala2 is modified (N-acetylalanine).

It belongs to the TBCA family. As to quaternary structure, supercomplex made of cofactors A to E. Cofactors A and D function by capturing and stabilizing tubulin in a quasi-native conformation. Cofactor E binds to the cofactor D-tubulin complex; interaction with cofactor C then causes the release of tubulin polypeptides that are committed to the native state. In terms of tissue distribution, widely expressed, but is most abundant in the testis.

It localises to the cytoplasm. It is found in the cytoskeleton. In terms of biological role, tubulin-folding protein; involved in the early step of the tubulin folding pathway. The polypeptide is Tubulin-specific chaperone A (TBCA) (Bos taurus (Bovine)).